The following is a 1003-amino-acid chain: Helicase MOV-10 (1003 aa).

Lys148 carries the post-translational modification N6-acetyllysine. Residues Thr160 and Thr254 each carry the phosphothreonine modification. Ser432 is subject to Phosphoserine. Residue 524 to 531 (GPPGTGKT) coordinates ATP. The short motif at 645–648 (DEAG) is the DEAG box element. Residues 921-965 (NPLLLGHDPDWKVFLEFCKENGGYTGCPFPAKLDLQQGQNLLQGL) are interaction with AGO2 and APOBEC3G. Residues 966–1003 (SKLSPSTSGPHSHDYLPQEREGEGGLSLQVEPEWRNEL) are disordered. 2 positions are modified to phosphoserine: Ser969 and Ser977. Residues 976–988 (HSHDYLPQEREGE) are compositionally biased toward basic and acidic residues.

The protein belongs to the DNA2/NAM7 helicase family. SDE3 subfamily. Interacts with DICER1, AGO2, TARBP2, EIF6 and RPL7A (60S ribosome subunit); they form a large RNA-induced silencing complex (RISC). Interacts with APOBEC3G in an RNA-dependent manner. Interacts with TRIM71 (via NHL repeats) in an RNA-dependent manner. Interacts with both protein products of LIRE1, ORF1p and ORF2p. Interacts with TUT4 and, to a lesser extent, TUT7; the interactions are RNA-dependent. Interacts with AGO2, TNRC6B and UPF1; the interactions are direct and RNA-dependent. Interacts with FMR1; this interaction is direct, occurs in an RNA-dependent manner on polysomes and induces association of MOV10 with RNAs. Interacts with SHFL; the interaction increases in presence of RNA. Interacts with DHX34; the interaction is RNA-independent. Interacts with IKBKE. Interacts with RBM46. In terms of assembly, (Microbial infection) Interacts with the human hepatitis delta virus (HDV) antigen HDAg. As to quaternary structure, (Microbial infection) Interacts with HIV-1 protein GAG. In terms of processing, ubiquitinated by the DCX(DCAF12) complex that specifically recognizes the glutamate-leucine (Glu-Leu) degron at the C-terminus, leading to its degradation. (Microbial infection) Cleaved and targeted for degradation by picornavirus proteases.

It is found in the cytoplasm. Its subcellular location is the P-body. The protein localises to the cytoplasmic ribonucleoprotein granule. It localises to the stress granule. The protein resides in the nucleus. The enzyme catalyses ATP + H2O = ADP + phosphate + H(+). Functionally, 5' to 3' RNA helicase that is involved in a number of cellular roles ranging from mRNA metabolism and translation, modulation of viral infectivity, inhibition of retrotransposition, or regulation of synaptic transmission. Plays an important role in innate antiviral immunity by promoting type I interferon production. Mechanistically, specifically uses IKKepsilon/IKBKE as the mediator kinase for IRF3 activation. Blocks HIV-1 virus replication at a post-entry step. Counteracts HIV-1 Vif-mediated degradation of APOBEC3G through its helicase activity by interfering with the ubiquitin-proteasome pathway. Also inhibits hepatitis B virus/HBV replication by interacting with HBV RNA and thereby inhibiting the early step of viral reverse transcription. Contributes to UPF1 mRNA target degradation by translocation along 3' UTRs. Required for microRNA (miRNA)-mediated gene silencing by the RNA-induced silencing complex (RISC). Required for both miRNA-mediated translational repression and miRNA-mediated cleavage of complementary mRNAs by RISC. In cooperation with FMR1, regulates miRNA-mediated translational repression by AGO2. Restricts retrotransposition of long interspersed element-1 (LINE-1) in cooperation with TUT4 and TUT7 counteracting the RNA chaperonne activity of L1RE1. Facilitates LINE-1 uridylation by TUT4 and TUT7. Required for embryonic viability and for normal central nervous system development and function. Plays two critical roles in early brain development: suppresses retroelements in the nucleus by directly inhibiting cDNA synthesis, while regulates cytoskeletal mRNAs to influence neurite outgrowth in the cytosol. May function as a messenger ribonucleoprotein (mRNP) clearance factor. In terms of biological role, (Microbial infection) Required for RNA-directed transcription and replication of the human hepatitis delta virus (HDV). Interacts with small capped HDV RNAs derived from genomic hairpin structures that mark the initiation sites of RNA-dependent HDV RNA transcription. The sequence is that of Helicase MOV-10 from Homo sapiens (Human).